A 143-amino-acid chain; its full sequence is 3-dehydroquinate dehydratase (143 aa).

Tyrosine 22 (proton acceptor) is an active-site residue. Positions 73, 79, and 86 each coordinate substrate. Histidine 99 serves as the catalytic Proton donor. Substrate contacts are provided by residues 100-101 (IS) and arginine 110.

It belongs to the type-II 3-dehydroquinase family. Homododecamer.

It catalyses the reaction 3-dehydroquinate = 3-dehydroshikimate + H2O. It participates in metabolic intermediate biosynthesis; chorismate biosynthesis; chorismate from D-erythrose 4-phosphate and phosphoenolpyruvate: step 3/7. Functionally, catalyzes a trans-dehydration via an enolate intermediate. This is 3-dehydroquinate dehydratase from Mycobacterium avium (strain 104).